A 274-amino-acid polypeptide reads, in one-letter code: GATA transcription factor 1 (274 aa).

Disordered regions lie at residues 1 to 39 and 102 to 132; these read MEMESFMDDLLNFSVPEEEEDDDEHTQPPRNITRRKTGL and SPVSVLETSSHSSTTTTSNSSGGSNGSTAVA. The short motif at 152-159 is the Nuclear localization signal element; the sequence is KARSKRRR. Residues 190 to 244 form a GATA-type zinc finger; it reads LIMGRKCQHCGAEKTPQWRAGPAGPKTLCNACGVRYKSGRLVPEYRPANSPTFTA.

This sequence belongs to the type IV zinc-finger family. Class A subfamily. As to expression, mostly expressed in roots. Also expressed in stems, flowers and leaves.

It is found in the nucleus. Its function is as follows. Transcriptional activator that specifically binds 5'-GATA-3' or 5'-GAT-3' motifs within gene promoters. May be involved in the regulation of some light-responsive genes. This Arabidopsis thaliana (Mouse-ear cress) protein is GATA transcription factor 1 (GATA1).